The chain runs to 291 residues: uncharacterized protein (291 aa).

Residues 1 to 58 form the HTH lysR-type domain; it reads MDLKWLQTFIAAAESESFREAAEHLYLTQPAVSQHMRKLEDELDMRLFLHSGRRVVLT. Positions 18-37 form a DNA-binding region, H-T-H motif; the sequence is FREAAEHLYLTQPAVSQHMR.

The protein belongs to the LysR transcriptional regulatory family.

This is an uncharacterized protein from Bacillus subtilis (strain 168).